The chain runs to 185 residues: Ribosome-recycling factor (185 aa).

The protein belongs to the RRF family.

The protein localises to the cytoplasm. In terms of biological role, responsible for the release of ribosomes from messenger RNA at the termination of protein biosynthesis. May increase the efficiency of translation by recycling ribosomes from one round of translation to another. In Chromobacterium violaceum (strain ATCC 12472 / DSM 30191 / JCM 1249 / CCUG 213 / NBRC 12614 / NCIMB 9131 / NCTC 9757 / MK), this protein is Ribosome-recycling factor.